A 156-amino-acid polypeptide reads, in one-letter code: Cyanate hydratase (156 aa).

Residues Arg96, Glu99, and Ser122 contribute to the active site.

The protein belongs to the cyanase family.

It catalyses the reaction cyanate + hydrogencarbonate + 3 H(+) = NH4(+) + 2 CO2. Catalyzes the reaction of cyanate with bicarbonate to produce ammonia and carbon dioxide. The polypeptide is Cyanate hydratase (Escherichia coli (strain K12 / DH10B)).